A 169-amino-acid polypeptide reads, in one-letter code: Shikimate kinase (169 aa).

13–18 serves as a coordination point for ATP; the sequence is GAGKST. S17 provides a ligand contact to Mg(2+). 3 residues coordinate substrate: D35, R59, and G80. ATP is bound at residue R117. R136 contributes to the substrate binding site. Residue R153 coordinates ATP.

This sequence belongs to the shikimate kinase family. As to quaternary structure, monomer. The cofactor is Mg(2+).

It localises to the cytoplasm. It carries out the reaction shikimate + ATP = 3-phosphoshikimate + ADP + H(+). It participates in metabolic intermediate biosynthesis; chorismate biosynthesis; chorismate from D-erythrose 4-phosphate and phosphoenolpyruvate: step 5/7. Functionally, catalyzes the specific phosphorylation of the 3-hydroxyl group of shikimic acid using ATP as a cosubstrate. The polypeptide is Shikimate kinase (Corynebacterium glutamicum (strain ATCC 13032 / DSM 20300 / JCM 1318 / BCRC 11384 / CCUG 27702 / LMG 3730 / NBRC 12168 / NCIMB 10025 / NRRL B-2784 / 534)).